Here is a 356-residue protein sequence, read N- to C-terminus: Dihydroorotate dehydrogenase (quinone) (356 aa).

FMN is bound by residues 67–71 and Thr91; that span reads AGFDK. A substrate-binding site is contributed by Lys71. 116–120 is a binding site for substrate; that stretch reads NRMGF. 2 residues coordinate FMN: Asn153 and Asn186. A substrate-binding site is contributed by Asn186. Ser189 serves as the catalytic Nucleophile. Asn191 provides a ligand contact to substrate. Residues Lys228 and Thr256 each coordinate FMN. 257–258 contributes to the substrate binding site; sequence NT. Residues Gly282, Gly311, and 332-333 each bind FMN; that span reads YT.

Belongs to the dihydroorotate dehydrogenase family. Type 2 subfamily. In terms of assembly, monomer. FMN serves as cofactor.

Its subcellular location is the cell membrane. The catalysed reaction is (S)-dihydroorotate + a quinone = orotate + a quinol. The protein operates within pyrimidine metabolism; UMP biosynthesis via de novo pathway; orotate from (S)-dihydroorotate (quinone route): step 1/1. Its function is as follows. Catalyzes the conversion of dihydroorotate to orotate with quinone as electron acceptor. This is Dihydroorotate dehydrogenase (quinone) from Pseudarthrobacter chlorophenolicus (strain ATCC 700700 / DSM 12829 / CIP 107037 / JCM 12360 / KCTC 9906 / NCIMB 13794 / A6) (Arthrobacter chlorophenolicus).